The following is a 135-amino-acid chain: Ribosome-binding factor A (135 aa).

This sequence belongs to the RbfA family. As to quaternary structure, monomer. Binds 30S ribosomal subunits, but not 50S ribosomal subunits or 70S ribosomes.

The protein resides in the cytoplasm. One of several proteins that assist in the late maturation steps of the functional core of the 30S ribosomal subunit. Associates with free 30S ribosomal subunits (but not with 30S subunits that are part of 70S ribosomes or polysomes). Required for efficient processing of 16S rRNA. May interact with the 5'-terminal helix region of 16S rRNA. The protein is Ribosome-binding factor A of Sinorhizobium fredii (strain NBRC 101917 / NGR234).